The primary structure comprises 195 residues: Imidazoleglycerol-phosphate dehydratase (195 aa).

This sequence belongs to the imidazoleglycerol-phosphate dehydratase family.

The protein resides in the cytoplasm. It carries out the reaction D-erythro-1-(imidazol-4-yl)glycerol 3-phosphate = 3-(imidazol-4-yl)-2-oxopropyl phosphate + H2O. Its pathway is amino-acid biosynthesis; L-histidine biosynthesis; L-histidine from 5-phospho-alpha-D-ribose 1-diphosphate: step 6/9. This chain is Imidazoleglycerol-phosphate dehydratase, found in Desulfosudis oleivorans (strain DSM 6200 / JCM 39069 / Hxd3) (Desulfococcus oleovorans).